A 131-amino-acid polypeptide reads, in one-letter code: MKKHGVLNSEIAAVLASLGHTDTVVIADCGLPIPDGVKRIDLAVEIGKPSFLEVLQVVADDMAIEKVTLAEEVIINNAEVNKEIERKLIEPAFEYVSHEQFKEHTKKAKAIIRTGEATPYANVILHAGVIF.

The Proton donor role is filled by His-20. Residues Asp-28, His-98, and 120-122 (YAN) contribute to the substrate site.

The protein belongs to the RbsD / FucU family. RbsD subfamily. As to quaternary structure, homodecamer.

The protein localises to the cytoplasm. The catalysed reaction is beta-D-ribopyranose = beta-D-ribofuranose. It functions in the pathway carbohydrate metabolism; D-ribose degradation; D-ribose 5-phosphate from beta-D-ribopyranose: step 1/2. In terms of biological role, catalyzes the interconversion of beta-pyran and beta-furan forms of D-ribose. The protein is D-ribose pyranase of Bacillus cereus (strain ATCC 14579 / DSM 31 / CCUG 7414 / JCM 2152 / NBRC 15305 / NCIMB 9373 / NCTC 2599 / NRRL B-3711).